Reading from the N-terminus, the 61-residue chain is Small ribosomal subunit protein uS14 (61 aa).

Cys-24, Cys-27, Cys-40, and Cys-43 together coordinate Zn(2+).

This sequence belongs to the universal ribosomal protein uS14 family. Zinc-binding uS14 subfamily. Part of the 30S ribosomal subunit. Contacts proteins S3 and S10. Requires Zn(2+) as cofactor.

Its function is as follows. Binds 16S rRNA, required for the assembly of 30S particles and may also be responsible for determining the conformation of the 16S rRNA at the A site. This is Small ribosomal subunit protein uS14 from Sulfurimonas denitrificans (strain ATCC 33889 / DSM 1251) (Thiomicrospira denitrificans (strain ATCC 33889 / DSM 1251)).